Reading from the N-terminus, the 626-residue chain is Putative ankyrin repeat protein R837 (626 aa).

ANK repeat units follow at residues 42-72 (EYFN…GLIR), 80-109 (TLNT…NHRY), 110-139 (SEDK…NIKS), 140-169 (RNNY…DITV), 171-199 (DYEV…DIKK), 201-230 (NKKR…DVYR), 242-269 (KNYK…YQLS), 270-298 (DTNN…LHEL), 299-328 (NLNQ…DINT), 330-358 (GNSC…RLTS), 393-416 (TIMS…KSSL), 417-446 (DYES…ITKQ), 452-479 (INNS…GINI), 480-509 (CINY…NINE), 510-539 (FGDL…NIYI), 540-569 (IKDN…DYHK), 570-599 (KNEL…KTKT), and 601-626 (FFDP…NEIK).

The polypeptide is Putative ankyrin repeat protein R837 (Acanthamoeba polyphaga (Amoeba)).